Reading from the N-terminus, the 335-residue chain is Nucleoid-associated protein PC1_1634 (335 aa).

This sequence belongs to the YejK family.

The protein resides in the cytoplasm. It is found in the nucleoid. The protein is Nucleoid-associated protein PC1_1634 of Pectobacterium carotovorum subsp. carotovorum (strain PC1).